Here is a 426-residue protein sequence, read N- to C-terminus: Egl nine homolog 1 (426 aa).

Alanine 2 carries the N-acetylalanine modification. A required for nuclear export region spans residues 6-20; that stretch reads GGPGGPSPSERDRQY. Position 12 is a phosphoserine (serine 12). Residues cysteine 21, cysteine 24, cysteine 33, cysteine 36, cysteine 42, histidine 46, histidine 54, and cysteine 58 each contribute to the Zn(2+) site. The MYND-type; atypical zinc-finger motif lies at 21–58; that stretch reads CELCGKMENLLRCSRCRSSFYCCKEHQRQDWKKHKLVC. Disordered regions lie at residues 65 to 129 and 160 to 184; these read LGHG…PCRA and ANLY…PNGQ. The span at 77 to 87 shows a compositional bias: pro residues; that stretch reads PAPPAAVPPPR. Residues 89–103 show a composition bias toward basic and acidic residues; that stretch reads GAREPRKAAARRDNA. Over residues 120–129 the composition is skewed to low complexity; that stretch reads PAAAASPCRA. Residue serine 125 is modified to Phosphoserine. S-nitrosocysteine is present on residues cysteine 201 and cysteine 208. Positions 241-251 are beta(2)beta(3) 'finger-like' loop; that stretch reads VSQKSDSSKDI. The region spanning 291 to 392 is the Fe2OG dioxygenase domain; it reads KINGRTKAMV…RYAITVWYFD (102 aa). Cysteine 302 carries the post-translational modification S-nitrosocysteine. 2 residues coordinate Fe cation: histidine 313 and aspartate 315. Residues cysteine 323 and cysteine 326 each carry the S-nitrosocysteine modification. Histidine 374 is a Fe cation binding site. Arginine 383 contacts 2-oxoglutarate.

Monomer. Interacts with ING4; the interaction inhibits the hydroxylation of HIF alpha proteins. Interacts with PTGES3 (via PXLE motif); thereby recruiting EGLN1 to the HSP90 pathway to facilitate HIF alpha proteins hydroxylation. Interacts with LIMD1. Found in a complex composed of LIMD1, VHL, EGLN1/PHD2, ELOB and CUL2. Interacts with EPAS1. Interacts with CBFA2T3. Interacts with HIF1A. It depends on Fe(2+) as a cofactor. The cofactor is L-ascorbate. In terms of processing, S-nitrosylation inhibits the enzyme activity up to 60% under aerobic conditions. Chelation of Fe(2+) has no effect on the S-nitrosylation. It is uncertain whether nitrosylation occurs on Cys-323 or Cys-326. In terms of tissue distribution, according to PubMed:11056053, widely expressed with highest levels in skeletal muscle and heart, moderate levels in pancreas, brain (dopaminergic neurons of adult and fetal substantia nigra) and kidney, and lower levels in lung and liver. According to PubMed:12351678 widely expressed with highest levels in brain, kidney and adrenal gland. Expressed in cardiac myocytes, aortic endothelial cells and coronary artery smooth muscle. According to PubMed:12788921; expressed in adult and fetal heart, brain, liver, lung, skeletal muscle and kidney. Also expressed in placenta. Highest levels in adult heart, brain, lung and liver and fetal brain, heart spleen and skeletal muscle.

The protein localises to the cytoplasm. It is found in the nucleus. The enzyme catalyses L-prolyl-[hypoxia-inducible factor alpha subunit] + 2-oxoglutarate + O2 = trans-4-hydroxy-L-prolyl-[hypoxia-inducible factor alpha subunit] + succinate + CO2. With respect to regulation, following exposure to hypoxia, activated in HeLa cells but not in cardiovascular cells. In terms of biological role, cellular oxygen sensor that catalyzes, under normoxic conditions, the post-translational formation of 4-hydroxyproline in hypoxia-inducible factor (HIF) alpha proteins. Hydroxylates a specific proline found in each of the oxygen-dependent degradation (ODD) domains (N-terminal, NODD, and C-terminal, CODD) of HIF1A. Also hydroxylates HIF2A. Has a preference for the CODD site for both HIF1A and HIF1B. Hydroxylated HIFs are then targeted for proteasomal degradation via the von Hippel-Lindau ubiquitination complex. Under hypoxic conditions, the hydroxylation reaction is attenuated allowing HIFs to escape degradation resulting in their translocation to the nucleus, heterodimerization with HIF1B, and increased expression of hypoxy-inducible genes. EGLN1 is the most important isozyme under normoxia and, through regulating the stability of HIF1, involved in various hypoxia-influenced processes such as angiogenesis in retinal and cardiac functionality. Target proteins are preferentially recognized via a LXXLAP motif. The sequence is that of Egl nine homolog 1 from Homo sapiens (Human).